We begin with the raw amino-acid sequence, 129 residues long: Small ribosomal subunit protein uS11 (129 aa).

Belongs to the universal ribosomal protein uS11 family. As to quaternary structure, part of the 30S ribosomal subunit. Interacts with proteins S7 and S18. Binds to IF-3.

Functionally, located on the platform of the 30S subunit, it bridges several disparate RNA helices of the 16S rRNA. Forms part of the Shine-Dalgarno cleft in the 70S ribosome. The polypeptide is Small ribosomal subunit protein uS11 (Pseudomonas fluorescens (strain SBW25)).